We begin with the raw amino-acid sequence, 252 residues long: Probable transcriptional regulatory protein TW504 (252 aa).

It belongs to the TACO1 family.

It localises to the cytoplasm. This chain is Probable transcriptional regulatory protein TW504, found in Tropheryma whipplei (strain TW08/27) (Whipple's bacillus).